Reading from the N-terminus, the 1005-residue chain is Translocated actin-recruiting phosphoprotein (1005 aa).

Over residues 1–10 the composition is skewed to polar residues; that stretch reads MTNSISGDQP. Disordered stretches follow at residues 1–36, 74–128, 191–214, 343–365, 611–645, 661–748, and 792–847; these read MTNSISGDQPTVTTFTSSTTSASGASGSLGASSVST, PTVT…DYEP, SIDDSSTSDPENTSGGAAALNSLR, SIDDSSTSDPENTSGGAAALNSL, WGTQAGPSSEDDGISFSNETPGAGPAAAPSPTPSS, NIRD…DGPA, and TGTS…TSLM. Composition is skewed to low complexity over residues 11–36 and 74–121; these read TVTTFTSSTTSASGASGSLGASSVST and PTVT…SSDH. Polar residues-rich tracts occupy residues 191–205 and 343–357; these read SIDDSSTSDPENTSG. 3 stretches are compositionally biased toward low complexity: residues 661–700, 715–734, and 831–846; these read NIRDTNVNTTNTTPTTQSTDASTDTSDIDNINTNNQTDDI, GDISETESSSGDDSGSVSSS, and STTTLRTGTGATTTSL.

The protein belongs to the chlamydial CPn_0572/CT_456/TC_0741 family. Post-translationally, phosphorylated on a tyrosine on attachment to the host cell. Tyrosine phosphorylation is temporally and spatially associated with recruitment of actin to the site of chlamydial entry. Phosphorylated Tarp seems to remain cytoplasmically exposed on the inclusion membrane at one side of internalized elementary bodies for several hours after entry.

It localises to the secreted. Appears to initiate or participate in signaling events that regulate the actin recruitment, which ultimately leads to internalization. In Chlamydia trachomatis serovar L2 (strain ATCC VR-902B / DSM 19102 / 434/Bu), this protein is Translocated actin-recruiting phosphoprotein (tarP).